The following is a 256-amino-acid chain: 1-(5-phosphoribosyl)-5-[(5-phosphoribosylamino)methylideneamino] imidazole-4-carboxamide isomerase (256 aa).

Catalysis depends on aspartate 8, which acts as the Proton acceptor. Aspartate 130 functions as the Proton donor in the catalytic mechanism.

It belongs to the HisA/HisF family.

The protein localises to the cytoplasm. The catalysed reaction is 1-(5-phospho-beta-D-ribosyl)-5-[(5-phospho-beta-D-ribosylamino)methylideneamino]imidazole-4-carboxamide = 5-[(5-phospho-1-deoxy-D-ribulos-1-ylimino)methylamino]-1-(5-phospho-beta-D-ribosyl)imidazole-4-carboxamide. The protein operates within amino-acid biosynthesis; L-histidine biosynthesis; L-histidine from 5-phospho-alpha-D-ribose 1-diphosphate: step 4/9. The chain is 1-(5-phosphoribosyl)-5-[(5-phosphoribosylamino)methylideneamino] imidazole-4-carboxamide isomerase from Pelodictyon phaeoclathratiforme (strain DSM 5477 / BU-1).